Here is a 155-residue protein sequence, read N- to C-terminus: Protein SREK1IP1 (155 aa).

The segment at 13–30 (AGCKKCGYPGHLTFECRN) adopts a CCHC-type zinc-finger fold. The interval 44 to 155 (VSSTSSEDSD…TPNSSEFSRK (112 aa)) is disordered. S52 carries the post-translational modification Phosphoserine. Basic and acidic residues predominate over residues 66-84 (QEKRINEEEEKKKEKSKEK). Positions 85-94 (IKLKKKRKRS) are enriched in basic residues. A phosphoserine mark is found at S96 and S97. Over residues 107–142 (QKKQKYQKKEKKKEKKSKSKKGKHHKKEKKKRKKEK) the composition is skewed to basic residues. Residue T146 is modified to Phosphothreonine. The span at 146–155 (TPNSSEFSRK) shows a compositional bias: polar residues.

Interacts with SREK1/SFRS12.

Its function is as follows. Possible splicing regulator involved in the control of cellular survival. The polypeptide is Protein SREK1IP1 (SREK1IP1) (Homo sapiens (Human)).